The primary structure comprises 746 residues: UvrABC system protein C (746 aa).

Residues 18–97 enclose the GIY-YIG domain; sequence AKPGVYKWRD…IKEFDPRFNV (80 aa). Positions 211-246 constitute a UVR domain; sequence RPYIAQLTRDMKEASAELEFEKAARLRDQIQMLETV. The segment at 557–577 is disordered; sequence ANGNDNGEGGSDISGKGHAVP.

This sequence belongs to the UvrC family. Interacts with UvrB in an incision complex.

The protein resides in the cytoplasm. The UvrABC repair system catalyzes the recognition and processing of DNA lesions. UvrC both incises the 5' and 3' sides of the lesion. The N-terminal half is responsible for the 3' incision and the C-terminal half is responsible for the 5' incision. This chain is UvrABC system protein C, found in Bifidobacterium longum (strain NCC 2705).